The sequence spans 77 residues: Small ribosomal subunit protein bS18 (77 aa).

The protein belongs to the bacterial ribosomal protein bS18 family. Part of the 30S ribosomal subunit. Forms a tight heterodimer with protein bS6.

Binds as a heterodimer with protein bS6 to the central domain of the 16S rRNA, where it helps stabilize the platform of the 30S subunit. The sequence is that of Small ribosomal subunit protein bS18 from Bacillus cereus (strain ATCC 10987 / NRS 248).